The chain runs to 222 residues: Probable pyridoxal 5'-phosphate synthase subunit SNO3 (222 aa).

58–60 contacts L-glutamine; it reads GES. Residue Cys91 is the Nucleophile of the active site. L-glutamine is bound by residues Arg120 and 151 to 152; that span reads IR. Residues His197 and Glu199 each act as charge relay system in the active site.

Belongs to the glutaminase PdxT/SNO family.

The catalysed reaction is aldehydo-D-ribose 5-phosphate + D-glyceraldehyde 3-phosphate + L-glutamine = pyridoxal 5'-phosphate + L-glutamate + phosphate + 3 H2O + H(+). It catalyses the reaction L-glutamine + H2O = L-glutamate + NH4(+). Its pathway is cofactor biosynthesis; pyridoxal 5'-phosphate biosynthesis. Catalyzes the hydrolysis of glutamine to glutamate and ammonia as part of the biosynthesis of pyridoxal 5'-phosphate. The resulting ammonia molecule is channeled to the active site of a SNZ isoform. This is Probable pyridoxal 5'-phosphate synthase subunit SNO3 (SNO3) from Saccharomyces cerevisiae (strain ATCC 204508 / S288c) (Baker's yeast).